We begin with the raw amino-acid sequence, 157 residues long: uncharacterized protein (157 aa).

Residues 6-26 form a helical membrane-spanning segment; the sequence is LVGGVLRVLVVVGAVFDVAVL. Residues 33–157 enclose the Ricin B-type lectin domain; the sequence is ADGPVQLKSR…APDQQWDSVP (125 aa).

The protein resides in the membrane. This is an uncharacterized protein from Mycobacterium tuberculosis (strain CDC 1551 / Oshkosh).